We begin with the raw amino-acid sequence, 541 residues long: Interleukin-18 receptor 1 (541 aa).

The signal sequence occupies residues 1–18 (MNCRELPLTLWVLISVST). 2 cysteine pairs are disulfide-bonded: cysteine 22–cysteine 41 and cysteine 43–cysteine 81. Residues 22–329 (CTSRPHITVV…ADIPGHVFTR (308 aa)) are Extracellular-facing. 3 consecutive Ig-like C2-type domains span residues 33 to 121 (GEPF…SCFT), 133 to 212 (KKFF…DRSN), and 220 to 312 (PKLN…KSFI). N-linked (GlcNAc...) asparagine glycans are attached at residues asparagine 91, asparagine 102, asparagine 150, asparagine 197, asparagine 203, asparagine 236, asparagine 255, and asparagine 297. Intrachain disulfides connect cysteine 119–cysteine 158 and cysteine 140–cysteine 185. A disulfide bridge connects residues cysteine 237 and cysteine 298. Residues 330–350 (GMIIAVLILVAVVCLVTVCVI) traverse the membrane as a helical segment. Over 351-541 (YRVDLVLFYR…PEVLPVLSES (191 aa)) the chain is Cytoplasmic. In terms of domain architecture, TIR spans 373–520 (KTYDAFVSYL…RFWKNLLYLM (148 aa)). Glutamate 455 is a catalytic residue.

It belongs to the interleukin-1 receptor family. As to quaternary structure, forms a ternary complex with IL18 and IL18RAP. Within this complex, IL18R1 is involved in ligand-binding and IL18RAP in signaling leading to NF-kappa-B and JNK activation. Interacts with SLC12A3 in peritoneal macrophages; this interaction is increased by IL18 treatment. N-glycosylated. N-linked glycosyl chains contribute to ligand recognition and intra-receptor interactions required for formation of an active ternary receptor complex. In terms of tissue distribution, highly expressed in leukocytes, spleen, lung. Also expressed, but at lower levels, in liver, small intestine, colon, prostate, thymus, placenta, and heart. Specifically coexpressed with IL18R1 in Th1 cells.

Its subcellular location is the membrane. It catalyses the reaction NAD(+) + H2O = ADP-D-ribose + nicotinamide + H(+). In terms of biological role, within the IL18 receptor complex, responsible for the binding of the pro-inflammatory cytokine IL18, but not IL1A nor IL1B. Involved in IL18-mediated IFNG synthesis from T-helper 1 (Th1) cells. Contributes to IL18-induced cytokine production, either independently of SLC12A3, or as a complex with SLC12A3. This Homo sapiens (Human) protein is Interleukin-18 receptor 1.